Consider the following 327-residue polypeptide: MREVLLLGSLVVLALLSLFPCCSCLSQGAEEEEDDGEVRLMGLAGEAAGSPGSGGGFSANGKFSYGYASSPGKRSSMEDFYDTRIDGVDGETVGLFGVFDGHGGARAAEFVKQNLFTNLIKHPKLFSDTKSAIAETYTSTDSELLKAETSHNRDAGSTASTAILVGDRLLVANVGDSRAVICRGGDAIAVSRDHKPDQSDERQRIEDAGGFVMWAGTWRVGGVLAVSRAFGDKLLKQYVVADPEIKEEVVDSSLEFLILASDGLWDVVTNEEAVAMVKPILDSEQAAKKLLQEASQRGSADNITCLVVRFLEQENHLPERPTNDQAS.

Positions 1–24 (MREVLLLGSLVVLALLSLFPCCSC) are cleaved as a signal peptide. The PPM-type phosphatase domain maps to 64-310 (SYGYASSPGK…DNITCLVVRF (247 aa)). Residues Asp100, Gly101, Asp262, and Asp301 each contribute to the Mn(2+) site.

It belongs to the PP2C family. Mg(2+) is required as a cofactor. Requires Mn(2+) as cofactor.

It catalyses the reaction O-phospho-L-seryl-[protein] + H2O = L-seryl-[protein] + phosphate. It carries out the reaction O-phospho-L-threonyl-[protein] + H2O = L-threonyl-[protein] + phosphate. This is Probable protein phosphatase 2C 59 from Oryza sativa subsp. japonica (Rice).